The chain runs to 224 residues: tRNA (guanine-N(7)-)-methyltransferase (224 aa).

S-adenosyl-L-methionine-binding residues include glutamate 57, aspartate 82, and aspartate 109. Position 167 (aspartate 167) interacts with substrate.

Belongs to the class I-like SAM-binding methyltransferase superfamily. TrmB family.

It catalyses the reaction guanosine(46) in tRNA + S-adenosyl-L-methionine = N(7)-methylguanosine(46) in tRNA + S-adenosyl-L-homocysteine. Its pathway is tRNA modification; N(7)-methylguanine-tRNA biosynthesis. Catalyzes the formation of N(7)-methylguanine at position 46 (m7G46) in tRNA. The chain is tRNA (guanine-N(7)-)-methyltransferase from Chloroflexus aggregans (strain MD-66 / DSM 9485).